Here is a 492-residue protein sequence, read N- to C-terminus: Signal transduction histidine-protein kinase/phosphatase MprB (492 aa).

Over 1 to 27 the chain is Cytoplasmic; the sequence is MAFPPNSWRPTGPLPTSSLSLRWRVMM. The helical transmembrane segment at 28–48 threads the bilayer; it reads LAMSMVALVVVLMAVAVYAVV. Over 49 to 165 the chain is Extracellular; it reads SRALYDDLDN…TVQVLRRLGT (117 aa). Residues 166 to 186 traverse the membrane as a helical segment; it reads VLLIVGGIGVAVAAIAGGAVA. An HAMP domain is found at 187-239; sequence RAGLRPVGRLTEAAERVARTDDLRPIPVVGSDELARLTEAFNMMLRALAESRE. Over 187–492 the chain is Cytoplasmic; the sequence is RAGLRPVGRL…DRGGHTVATE (306 aa). The region spanning 247-467 is the Histidine kinase domain; that stretch reads DAGHELRTPL…SVHMLLPGQR (221 aa). Position 250 is a phosphohistidine; by autocatalysis (H250). A disordered region spans residues 470–492; the sequence is DPGATRSAEGFVDDRGGHTVATE.

The cofactor is Mg(2+). Mn(2+) serves as cofactor. Post-translationally, autophosphorylated.

Its subcellular location is the cell membrane. The enzyme catalyses ATP + protein L-histidine = ADP + protein N-phospho-L-histidine.. Member of the two-component regulatory system MprB/MprA which contributes to maintaining a balance among several systems involved in stress resistance and is required for establishment and maintenance of persistent infection in the host. In response to environmental signals MprB acts both as a membrane-associated protein kinase that undergoes autophosphorylation and subsequently transfers the phosphate to MprA, and a protein phosphatase that dephosphorylates phospho-MprA. The sequence is that of Signal transduction histidine-protein kinase/phosphatase MprB (mprB) from Mycolicibacterium smegmatis (strain ATCC 700084 / mc(2)155) (Mycobacterium smegmatis).